The chain runs to 89 residues: MALTADEKTQIINEYATHEGDTGSPEVQVALLSKRIADLTEHLKEHKHDHHSRRGMQLMIGDRRRLLDYLKRVDINRYRSLIERLGLRR.

It belongs to the universal ribosomal protein uS15 family. In terms of assembly, part of the 30S ribosomal subunit. Forms a bridge to the 50S subunit in the 70S ribosome, contacting the 23S rRNA.

In terms of biological role, one of the primary rRNA binding proteins, it binds directly to 16S rRNA where it helps nucleate assembly of the platform of the 30S subunit by binding and bridging several RNA helices of the 16S rRNA. Forms an intersubunit bridge (bridge B4) with the 23S rRNA of the 50S subunit in the ribosome. The chain is Small ribosomal subunit protein uS15 from Bifidobacterium longum subsp. infantis (strain ATCC 15697 / DSM 20088 / JCM 1222 / NCTC 11817 / S12).